We begin with the raw amino-acid sequence, 486 residues long: Homoserine O-acetyltransferase (486 aa).

The region spanning 66–436 (NVLVICHALT…PEGHDAFLLE (371 aa)) is the AB hydrolase-1 domain. The active-site Nucleophile is the S162. Residues 248–281 (KFSRRSPSIAQQQKAQREETRKPSTVSEHSLQIH) form a disordered region. 2 stretches are compositionally biased toward polar residues: residues 250–261 (SRRSPSIAQQQK) and 270–280 (PSTVSEHSLQI). Residues D401 and H430 contribute to the active site.

The protein belongs to the AB hydrolase superfamily. MetX family.

It is found in the cytoplasm. It catalyses the reaction L-homoserine + acetyl-CoA = O-acetyl-L-homoserine + CoA. It functions in the pathway amino-acid biosynthesis; L-methionine biosynthesis via de novo pathway; O-acetyl-L-homoserine from L-homoserine: step 1/1. Functionally, commits homoserine to the methionine biosynthesis pathway by catalyzing its O-acetylation. The sequence is that of Homoserine O-acetyltransferase (MET2) from Saccharomyces cerevisiae (strain ATCC 204508 / S288c) (Baker's yeast).